A 260-amino-acid polypeptide reads, in one-letter code: Pyridoxine 5'-phosphate synthase (260 aa).

Asn-15 serves as a coordination point for 3-amino-2-oxopropyl phosphate. A 1-deoxy-D-xylulose 5-phosphate-binding site is contributed by Asp-17–His-18. Arg-26 provides a ligand contact to 3-amino-2-oxopropyl phosphate. His-51 serves as the catalytic Proton acceptor. Arg-53 and His-58 together coordinate 1-deoxy-D-xylulose 5-phosphate. Residue Glu-78 is the Proton acceptor of the active site. Thr-108 is a 1-deoxy-D-xylulose 5-phosphate binding site. Residue His-199 is the Proton donor of the active site. 3-amino-2-oxopropyl phosphate-binding positions include Gly-200 and Gly-221–His-222.

The protein belongs to the PNP synthase family. In terms of assembly, homooctamer; tetramer of dimers.

It localises to the cytoplasm. The catalysed reaction is 3-amino-2-oxopropyl phosphate + 1-deoxy-D-xylulose 5-phosphate = pyridoxine 5'-phosphate + phosphate + 2 H2O + H(+). It participates in cofactor biosynthesis; pyridoxine 5'-phosphate biosynthesis; pyridoxine 5'-phosphate from D-erythrose 4-phosphate: step 5/5. Catalyzes the complicated ring closure reaction between the two acyclic compounds 1-deoxy-D-xylulose-5-phosphate (DXP) and 3-amino-2-oxopropyl phosphate (1-amino-acetone-3-phosphate or AAP) to form pyridoxine 5'-phosphate (PNP) and inorganic phosphate. This is Pyridoxine 5'-phosphate synthase from Cupriavidus pinatubonensis (strain JMP 134 / LMG 1197) (Cupriavidus necator (strain JMP 134)).